We begin with the raw amino-acid sequence, 320 residues long: Glutathione synthetase (320 aa).

The ATP-grasp domain maps to 127–312 (KLAITEFPRF…VAGLMIDALE (186 aa)). 153-209 (LAEHEDIILKPLDGMGGAGIFRIQNTDHNIGVIIETLTRYGTRTIMAQRFLPEIREG) is a binding site for ATP. Positions 283 and 285 each coordinate Mg(2+).

This sequence belongs to the prokaryotic GSH synthase family. Requires Mg(2+) as cofactor. Mn(2+) serves as cofactor.

It catalyses the reaction gamma-L-glutamyl-L-cysteine + glycine + ATP = glutathione + ADP + phosphate + H(+). It participates in sulfur metabolism; glutathione biosynthesis; glutathione from L-cysteine and L-glutamate: step 2/2. This is Glutathione synthetase from Nitrosomonas europaea (strain ATCC 19718 / CIP 103999 / KCTC 2705 / NBRC 14298).